The sequence spans 563 residues: Ribulokinase (563 aa).

Belongs to the ribulokinase family.

It catalyses the reaction D-ribulose + ATP = D-ribulose 5-phosphate + ADP + H(+). The catalysed reaction is L-ribulose + ATP = L-ribulose 5-phosphate + ADP + H(+). The protein operates within carbohydrate degradation; L-arabinose degradation via L-ribulose; D-xylulose 5-phosphate from L-arabinose (bacterial route): step 2/3. The sequence is that of Ribulokinase from Halalkalibacterium halodurans (strain ATCC BAA-125 / DSM 18197 / FERM 7344 / JCM 9153 / C-125) (Bacillus halodurans).